A 116-amino-acid polypeptide reads, in one-letter code: uncharacterized protein (116 aa).

This is an uncharacterized protein from Bacillus subtilis (strain 168).